The sequence spans 1392 residues: ENHANCER OF AG-4 protein 2 (1392 aa).

Residues 20–77 (LGDLVLAKVKGFPAWPAKISRPEDWDRAPDPKKYFVQFFGTEEIAFVAPPDIQAFTSE) enclose the PWWP domain. Residues 184–194 (ESKVKTTSPVS) show a composition bias toward polar residues. Disordered stretches follow at residues 184–354 (ESKV…STGT), 384–428 (KRQR…PAAQ), 575–613 (KKPQ…GERL), and 723–766 (QGHH…GGSL). Composition is skewed to basic and acidic residues over residues 196-215 (SLEH…DKGT), 239-258 (KEAG…DKSN), and 311-345 (LESE…KCEI). The segment covering 391–400 (EHATSPSFSG) has biased composition (polar residues). The span at 401–417 (SRDKSGKGHLEQKDRSS) shows a compositional bias: basic and acidic residues. 2 stretches are compositionally biased toward polar residues: residues 591-601 (KISSSQSQPAN) and 725-744 (HHQQ…SRNQ). Positions 771–912 (EAAISRDAFE…RYIDDIRASG (142 aa)) constitute a CID domain. Disordered regions lie at residues 957-986 (FFSS…AGER), 1014-1356 (LEME…NYQP), and 1369-1392 (PGHT…WRPA). A compositionally biased stretch (pro residues) spans 1059-1129 (EDSPPLPQES…SPPPPPPPPS (71 aa)). The span at 1157 to 1175 (LSHQTYPGSMQQDRSSIFT) shows a compositional bias: polar residues. The segment covering 1215–1225 (SSREPSSFTSS) has biased composition (low complexity). Composition is skewed to polar residues over residues 1240-1255 (EASS…TPLS) and 1265-1284 (APSS…QHSY). Over residues 1293–1306 (QRDDARRYRNEEPW) the composition is skewed to basic and acidic residues. Over residues 1311 to 1320 (SGHSAENQNG) the composition is skewed to polar residues.

In terms of tissue distribution, expressed in the inflorescence meristem, floral primordia, inflorescence stem, and floral pedicels. Also detected in the shoot apical meristem, stems, leaves, embryos, and roots.

It is found in the nucleus. Its function is as follows. Transcription factor that functions as a repressor of flowering by enhancing the expression of several genes that delay flowering including FLC, FLM/MAF1, MAF2 and SVP. Also acts in the floral homeotic AGAMOUS (AG) pathway, specifically by processing the AGAMOUS pre-mRNA. Functions in association with HUA1 and HEN4 in AG pre-mRNA processing. Involved in all three aspects of the AG functions, the specification of stamen and carpel identities, the control of floral determinacy, and the spatial restriction of AP1 expression. Acts as a transcription regulator that controls anthocyanin accumulation. The sequence is that of ENHANCER OF AG-4 protein 2 from Arabidopsis thaliana (Mouse-ear cress).